We begin with the raw amino-acid sequence, 511 residues long: N-acetylgalactosamine-6-O-sulfatase (511 aa).

Serine 83 is subject to 3-oxoalanine (Ser).

It belongs to the sulfatase family. The conversion to 3-oxoalanine (also known as C-formylglycine, FGly), of a serine or cysteine residue in prokaryotes and of a cysteine residue in eukaryotes, is critical for catalytic activity.

Exosulfatase involved in the degradation of the glycosaminoglycans (GAGs) chondroitin sulfate (CS) and dermatan sulfate (DS). Catalyzes the hydrolysis of the 6-sulfate groups of the N-acetyl-D-galactosamine 6-sulfate units. GAG-specific sulfatases play a key role in the persistence of the major human gut symbiont B.thetaiotaomicron in the host gastrointestinal tract. The protein is N-acetylgalactosamine-6-O-sulfatase of Bacteroides thetaiotaomicron (strain ATCC 29148 / DSM 2079 / JCM 5827 / CCUG 10774 / NCTC 10582 / VPI-5482 / E50).